The primary structure comprises 186 residues: Homeobox expressed in ES cells 1 (186 aa).

A DNA-binding region (homeobox) is located at residues 109-168; that stretch reads GRRPRTAFTRSQIEILENVFRVNSYPGIDIREELAGKLALDEDRIQIWFQNRRAKLKRSH.

Belongs to the ANF homeobox family. As to quaternary structure, interacts (via N-terminus) with zyx.

The protein resides in the nucleus. In terms of biological role, regulates the earliest stages of development of the anterior neural plate. Plays a role in forebrain development by inhibiting the expression of otx2 and pax6 in the rostral region of the anterior neural plate. Necessary for both neural differentiation and neural patterning. Controls Spemann organizer development. May act as a transcriptional repressor. This Xenopus tropicalis (Western clawed frog) protein is Homeobox expressed in ES cells 1.